A 228-amino-acid chain; its full sequence is Nuclear phosphoprotein UL3 homolog (228 aa).

This sequence belongs to the alphaherpesvirinae HHV-1 UL3 family. Post-translationally, phosphorylated.

It localises to the host nucleus. The protein is Nuclear phosphoprotein UL3 homolog (MDV015) of Gallus gallus (Chicken).